Here is a 331-residue protein sequence, read N- to C-terminus: tRNA (guanine-N(1)-)-methyltransferase (331 aa).

2 stretches are compositionally biased toward low complexity: residues 77 to 99 (GSDT…QATR) and 107 to 134 (AQPG…GRAA). The segment at 77–137 (GSDTTARSGS…PGAGRAASSR (61 aa)) is disordered. S-adenosyl-L-methionine contacts are provided by residues glycine 169 and 193–198 (LGDYVL). The disordered stretch occupies residues 312-331 (WQRCSPAPSEQAPEGARDMA).

The protein belongs to the RNA methyltransferase TrmD family. In terms of assembly, homodimer.

It localises to the cytoplasm. The catalysed reaction is guanosine(37) in tRNA + S-adenosyl-L-methionine = N(1)-methylguanosine(37) in tRNA + S-adenosyl-L-homocysteine + H(+). Its function is as follows. Specifically methylates guanosine-37 in various tRNAs. This chain is tRNA (guanine-N(1)-)-methyltransferase, found in Kocuria rhizophila (strain ATCC 9341 / DSM 348 / NBRC 103217 / DC2201).